Consider the following 339-residue polypeptide: tRNA N6-adenosine threonylcarbamoyltransferase (339 aa).

2 residues coordinate Fe cation: H107 and H111. Residues 129-133, D162, G175, and N279 each bind substrate; that span reads LVSGG. D307 contributes to the Fe cation binding site.

Belongs to the KAE1 / TsaD family. Fe(2+) serves as cofactor.

The protein localises to the cytoplasm. It catalyses the reaction L-threonylcarbamoyladenylate + adenosine(37) in tRNA = N(6)-L-threonylcarbamoyladenosine(37) in tRNA + AMP + H(+). Functionally, required for the formation of a threonylcarbamoyl group on adenosine at position 37 (t(6)A37) in tRNAs that read codons beginning with adenine. Is involved in the transfer of the threonylcarbamoyl moiety of threonylcarbamoyl-AMP (TC-AMP) to the N6 group of A37, together with TsaE and TsaB. TsaD likely plays a direct catalytic role in this reaction. This is tRNA N6-adenosine threonylcarbamoyltransferase from Campylobacter curvus (strain 525.92).